A 237-amino-acid chain; its full sequence is MTVLPALPPLDDLETLNVHLETLSAENRVCWALEHGPDHPALSSSFGAQSAVMLHLLTRFAPDITVILVDTGYLFPETYRFADTLTERLKLNLKVYQPLRSGAWTEARHGRLWEQGIDGINQYNTLHKVEPMRRALEELQVGTWFTGLRRGQSSTRTQTSIVQRRDERYKISPIADWTDRDIWEYMKHHDLPYHPLWEQGYVSIGDIHTTRPLEPDMREEDTRFFGFKRECGIHENI.

Catalysis depends on cysteine 231, which acts as the Nucleophile; cysteine thiosulfonate intermediate.

It belongs to the PAPS reductase family. CysH subfamily.

Its subcellular location is the cytoplasm. It catalyses the reaction [thioredoxin]-disulfide + sulfite + adenosine 3',5'-bisphosphate + 2 H(+) = [thioredoxin]-dithiol + 3'-phosphoadenylyl sulfate. The protein operates within sulfur metabolism; hydrogen sulfide biosynthesis; sulfite from sulfate: step 3/3. Functionally, catalyzes the formation of sulfite from phosphoadenosine 5'-phosphosulfate (PAPS) using thioredoxin as an electron donor. The protein is Phosphoadenosine 5'-phosphosulfate reductase of Xylella fastidiosa (strain M23).